Here is a 969-residue protein sequence, read N- to C-terminus: RNA polymerase-associated protein RapA (969 aa).

Positions 164 to 334 (EVGRRYAPRV…FARLRLLDPD (171 aa)) constitute a Helicase ATP-binding domain. 177 to 184 (DEVGLGKT) lines the ATP pocket. The DEAH box motif lies at 280–283 (DEAH). One can recognise a Helicase C-terminal domain in the interval 492-668 (RVNWLLELLK…GKSDGLESLI (177 aa)).

It belongs to the SNF2/RAD54 helicase family. RapA subfamily. Interacts with the RNAP. Has a higher affinity for the core RNAP than for the holoenzyme. Its ATPase activity is stimulated by binding to RNAP.

In terms of biological role, transcription regulator that activates transcription by stimulating RNA polymerase (RNAP) recycling in case of stress conditions such as supercoiled DNA or high salt concentrations. Probably acts by releasing the RNAP, when it is trapped or immobilized on tightly supercoiled DNA. Does not activate transcription on linear DNA. Probably not involved in DNA repair. The polypeptide is RNA polymerase-associated protein RapA (Aliivibrio fischeri (strain MJ11) (Vibrio fischeri)).